The primary structure comprises 562 residues: Matrix metalloproteinase-25 (562 aa).

Residues 1–21 (MRLRLRLLALLLLLLAPPARA) form the signal peptide. A propeptide spanning residues 22-107 (PKPSAQDVSL…VAGLVRRRRR (86 aa)) is cleaved from the precursor. The short motif at 88 to 95 (PRCSLPDV) is the Cysteine switch element. C90 and H233 together coordinate Zn(2+). The active site involves E234. The Zn(2+) site is built by H237 and H243. Residues 278 to 313 (LYGKAPQTPYDKPTRKPLAPPPQPPASPTHSPSFPI) are disordered. Residues 295–304 (LAPPPQPPAS) are compositionally biased toward pro residues. Hemopexin repeat units lie at residues 314 to 363 (PDRC…WEGL), 367 to 412 (VRVV…GLPP), 413 to 461 (GEEV…EGAP), and 462 to 508 (PSPD…WLDC). C317 and C508 are disulfide-bonded. The tract at residues 490-526 (SIKTEPDAPQPMGPNWLDCPAPSSGPRAPRPPKATPV) is disordered. A539 carries the GPI-anchor amidated alanine lipid modification. Positions 540 to 562 (AGRWPAPIPLLLLPLLVGGVASR) are cleaved as a propeptide — removed in mature form.

It belongs to the peptidase M10A family. Zn(2+) serves as cofactor. Ca(2+) is required as a cofactor. In terms of processing, the precursor is cleaved by a furin endopeptidase. In terms of tissue distribution, expressed predominantly in leukocytes, lung and spleen. Expressed also in colon carcinoma, astrocytoma and glioblastomas.

It is found in the cell membrane. The protein resides in the secreted. The protein localises to the extracellular space. Its subcellular location is the extracellular matrix. Its function is as follows. May activate progelatinase A. This is Matrix metalloproteinase-25 (MMP25) from Homo sapiens (Human).